Here is a 438-residue protein sequence, read N- to C-terminus: Transmembrane protein 184C (438 aa).

7 helical membrane-spanning segments follow: residues 17–37 (LVAV…VWEL), 48–68 (AWFI…WVIL), 86–106 (ILWM…YPGI), 179–199 (YTVV…LGIY), 212–232 (YLVI…LLFY), 254–274 (VVFV…VGVI), and 287–307 (AVAT…AAIA). Residues 355–438 (RGHPRKKLFP…KEPSDKSVDS (84 aa)) are disordered. Composition is skewed to low complexity over residues 374–390 (SLLS…ASSM) and 404–413 (TVTPQTTPTT). The residue at position 422 (serine 422) is a Phosphoserine. The segment covering 425 to 438 (IGEKKEPSDKSVDS) has biased composition (basic and acidic residues).

Belongs to the TMEM184 family. Widely expressed with higher expression in lung, kidney, spleen, pancreas, thymus, prostate, testis, ovary, small intestine and thyroid.

It localises to the membrane. In terms of biological role, possible tumor suppressor which may play a role in cell growth. The sequence is that of Transmembrane protein 184C (TMEM184C) from Homo sapiens (Human).